The sequence spans 497 residues: MTDLPQAEGGCGAGNERLAAQAAAAGNAELMARFKADYPVGPHDKPQTMCPAFGALRVGLRMRRVATVLCGSACCVYGLSFISHFYGARRSVGYVPFDSETLVTGKLFEDVRASVHDLADPARYDAIVVINLCVPTASGVPLQLLPNEINGVRVVGIDVPGFGVPTHAEAKDVLSGAMLAYARQEVMAGPVPAPISGRSDRPTVTLLGEMFPADPMVIGAMLAPMGLAVGPTVPMRDWRELYAALDSKVVAAIHPFYTAAIRQFEAAGRAIVGSAPVGHDGTMEWLANIGRAYDVSPDKIAAAQNAFGPAIRGAIAGAPIKGRITVSGYEGSELLVARLLIESGAEVPYVGTAAPRTPWSAWDKDWLESRGVVVKYRASLEDDCAAMEGFEPDLAIGTTPLVQKAKALGIPALYFTNLISARPLMGPAGAGSLAQVMNAAMGNRERMGKMKAFFEGVGEGDTAGIWQDTPKLYPDFREQQRKKMEKAAKLAKAEEMI.

3 helical membrane-spanning segments follow: residues Val-65–Ile-82, Ala-126–Leu-142, and Met-216–Val-233.

The protein belongs to the BchN/ChlN family. Chlorophyllide reductase is composed of three subunits; BchX, BchY and BchZ. Forms a heterodimer of one BchY and one BchZ subunit.

It is found in the cell membrane. It carries out the reaction 3-deacetyl-3-vinylbacteriochlorophyllide a + 2 oxidized [2Fe-2S]-[ferredoxin] + ADP + phosphate = chlorophyllide a + 2 reduced [2Fe-2S]-[ferredoxin] + ATP + H2O + H(+). It catalyses the reaction bacteriochlorophyllide a + 2 oxidized [2Fe-2S]-[ferredoxin] + ADP + phosphate = 3-acetyl-3-devinylchlorophyllide a + 2 reduced [2Fe-2S]-[ferredoxin] + ATP + H2O + H(+). The catalysed reaction is 3-deacetyl-3-(1-hydroxyethyl)bacteriochlorophyllide a + 2 oxidized [2Fe-2S]-[ferredoxin] + ADP + phosphate = 3-devinyl-3-(1-hydroxyethyl)chlorophyllide a + 2 reduced [2Fe-2S]-[ferredoxin] + ATP + H2O + H(+). The protein operates within porphyrin-containing compound metabolism; bacteriochlorophyll biosynthesis (light-independent). Functionally, converts chlorophylls (Chl) into bacteriochlorophylls (BChl) by reducing ring B of the tetrapyrrole. The polypeptide is Chlorophyllide reductase 52.5 kDa chain (bchY) (Rhodobacter capsulatus (strain ATCC BAA-309 / NBRC 16581 / SB1003)).